An 890-amino-acid chain; its full sequence is MTQYTPMIQQYLKVKADYQDAFLFFRLGDFYEMFFEDAVKAAHELEITLTSRDGGSSERIPMCGVPYHAAKNYIEQLVEKGYKVAVCEQVEDPKTAKGVVRREVVQLITPGTMMEGRTIDEKENNFLAALTHFEDGSYALACNDLTTGQNTVTLLTGSVEDILLEVYATGSKEIVVDSSFSKDELNKLTETLKMTISYEDATAIPEGLEHLVKNVSQAKLIKAVGRLFNYVIRTQKRSLDHLQPVEIYYTNQFMKIDVHSKRNLELTETLRTKEKTGSLLWLLDKTKTAMGGRMLKQWMERPLIQKERIEERLEMVETFVNDYFLREDLKEKLKEVYDLERLAGKVAFGNVNARDLLQLRRSLLQVPAILEAISLLDNAYASRLIQGADPCESLTELLGRSIQENPPLSIKDGDIIKDGYNDKLDQYRYVSKNGKTWIAELEKRERDITGIKSLKIGYNRIFGYYIEVTKANLAALPEGRYERKQTLANAERFITDELKEKETLILEAEEKIVQLEYDLFTALREEVKVFIPKLQHLAKVISELDVLQSFATVSEEEQFVKPVLTTKREIFIKDGRHPVVEKVLNGKLYVPNDCIMPENMDVFLITGPNMSGKSTYMRQLALVTVMSQIGCFVPATEAVLPVFDQIFTRIGAADDLISGQSTFMVEMLEAKNAIANASERSLILFDEIGRGTSTYDGMALAQAIIEHIHDQIGAKTLFSTHYHELTVLEESLDQLKNVHVSAIEENGKVVFLHKIQDGAADKSYGIHVAQLAELPDSLIARAKEVLAQLEGQEEIIIPKRVEVKVQEAAPEPVVVKEEIAEIQETKVETEEESQLSFFGGEQSSKKQDKPLLDQKETAVLAQIKKIDLLDMTPLEAMNELYRLQKKLKKG.

Residue 607–614 (GPNMSGKS) participates in ATP binding. The interval 832-851 (ESQLSFFGGEQSSKKQDKPL) is disordered.

It belongs to the DNA mismatch repair MutS family.

Its function is as follows. This protein is involved in the repair of mismatches in DNA. It is possible that it carries out the mismatch recognition step. This protein has a weak ATPase activity. In Bacillus cereus (strain B4264), this protein is DNA mismatch repair protein MutS.